We begin with the raw amino-acid sequence, 140 residues long: Large ribosomal subunit protein bL17 (140 aa).

It belongs to the bacterial ribosomal protein bL17 family. Part of the 50S ribosomal subunit. Contacts protein L32.

This chain is Large ribosomal subunit protein bL17, found in Rhizobium etli (strain ATCC 51251 / DSM 11541 / JCM 21823 / NBRC 15573 / CFN 42).